A 328-amino-acid chain; its full sequence is Beta-ribofuranosylphenol 5'-phosphate synthase (328 aa).

This sequence belongs to the beta-RFA-P synthase family. As to quaternary structure, homodimer. It depends on Mg(2+) as a cofactor.

It carries out the reaction 5-phospho-alpha-D-ribose 1-diphosphate + 4-hydroxybenzoate + H(+) = 4-(beta-D-ribofuranosyl)phenol 5'-phosphate + CO2 + diphosphate. The enzyme catalyses 4-aminobenzoate + 5-phospho-alpha-D-ribose 1-diphosphate + H(+) = 4-(beta-D-ribofuranosyl)aminobenzene 5'-phosphate + CO2 + diphosphate. It functions in the pathway cofactor biosynthesis; 5,6,7,8-tetrahydromethanopterin biosynthesis. Its function is as follows. Catalyzes the condensation of 4-hydroxybenzoate (HB) with 5-phospho-alpha-D-ribose 1-diphosphate (PRPP) to produce beta-ribofuranosylphenol 5'-phosphate (beta-RFH-P). Also catalyzes the condensation of 4-aminobenzoate (pABA) with PRPP to produce beta-ribofuranosylaminobenzene 5'-phosphate (beta-RFA-P). Only 4-hydroxybenzoate is known to be biosynthesized by methanogenic archaea, but 4-aminobenzoate can be used as substrate by growing methanogens when it is present in the growth medium. This chain is Beta-ribofuranosylphenol 5'-phosphate synthase, found in Methanocaldococcus jannaschii (strain ATCC 43067 / DSM 2661 / JAL-1 / JCM 10045 / NBRC 100440) (Methanococcus jannaschii).